The primary structure comprises 718 residues: Probable glycerol-3-phosphate acyltransferase, mitochondrial (718 aa).

The HXXXXD motif motif lies at His-167–Asp-172. A helical membrane pass occupies residues Met-409–Ala-425.

This sequence belongs to the GPAT/DAPAT family.

The protein localises to the mitochondrion membrane. The enzyme catalyses sn-glycerol 3-phosphate + an acyl-CoA = a 1-acyl-sn-glycero-3-phosphate + CoA. It participates in phospholipid metabolism; CDP-diacylglycerol biosynthesis; CDP-diacylglycerol from sn-glycerol 3-phosphate: step 1/3. The protein is Probable glycerol-3-phosphate acyltransferase, mitochondrial (acl-6) of Caenorhabditis elegans.